The chain runs to 392 residues: Acetyl-CoA acetyltransferase (392 aa).

The Acyl-thioester intermediate role is filled by cysteine 89. Active-site proton acceptor residues include histidine 348 and cysteine 378.

This sequence belongs to the thiolase-like superfamily. Thiolase family. In terms of assembly, homotetramer.

The protein localises to the cytoplasm. The enzyme catalyses 2 acetyl-CoA = acetoacetyl-CoA + CoA. It functions in the pathway biopolymer metabolism; poly-(R)-3-hydroxybutanoate biosynthesis. It participates in metabolic intermediate biosynthesis; (R)-mevalonate biosynthesis; (R)-mevalonate from acetyl-CoA: step 1/3. This Shinella zoogloeoides (Crabtreella saccharophila) protein is Acetyl-CoA acetyltransferase.